The sequence spans 207 residues: Large ribosomal subunit protein uL4 (207 aa).

The segment at 50–76 is disordered; that stretch reads KTKTVSEVSGTTKKPFKQKGTGNARQG.

The protein belongs to the universal ribosomal protein uL4 family. As to quaternary structure, part of the 50S ribosomal subunit.

One of the primary rRNA binding proteins, this protein initially binds near the 5'-end of the 23S rRNA. It is important during the early stages of 50S assembly. It makes multiple contacts with different domains of the 23S rRNA in the assembled 50S subunit and ribosome. Functionally, forms part of the polypeptide exit tunnel. The chain is Large ribosomal subunit protein uL4 from Rickettsia canadensis (strain McKiel).